The following is a 61-amino-acid chain: Small ribosomal subunit protein uS14 (61 aa).

The Zn(2+) site is built by Cys24, Cys27, Cys40, and Cys43.

The protein belongs to the universal ribosomal protein uS14 family. Zinc-binding uS14 subfamily. As to quaternary structure, part of the 30S ribosomal subunit. Contacts proteins S3 and S10. Zn(2+) serves as cofactor.

In terms of biological role, binds 16S rRNA, required for the assembly of 30S particles and may also be responsible for determining the conformation of the 16S rRNA at the A site. In Mycobacterium leprae (strain Br4923), this protein is Small ribosomal subunit protein uS14.